The primary structure comprises 97 residues: Coiled-coil domain-containing protein 167 (97 aa).

The stretch at 36-80 (LRKMELTEEGRKSLEKEKSSLSSRLSNYERELKSLRHENRKNMLL) forms a coiled coil. The chain crosses the membrane as a helical span at residues 78–95 (MLLSVAIFLLFAVGYYCW).

It localises to the membrane. This is Coiled-coil domain-containing protein 167 (ccdc167) from Xenopus tropicalis (Western clawed frog).